Here is a 139-residue protein sequence, read N- to C-terminus: Class I hydrophobin 1 (139 aa).

Residues 1–21 (MFFRISTVFVVALAAFAAASP) form the signal peptide. Intrachain disulfides connect cysteine 57–cysteine 118, cysteine 64–cysteine 112, cysteine 65–cysteine 98, and cysteine 119–cysteine 132.

Belongs to the fungal hydrophobin family. In terms of assembly, self-assembles to form functional amyloid fibrils called rodlets. Self-assembly into fibrillar rodlets occurs spontaneously at hydrophobic:hydrophilic interfaces and the rodlets further associate laterally to form amphipathic monolayers.

The protein localises to the secreted. It is found in the cell wall. Aerial growth, conidiation, and dispersal of filamentous fungi in the environment rely upon a capability of their secreting small amphipathic proteins called hydrophobins (HPBs) with low sequence identity. Class I can self-assemble into an outermost layer of rodlet bundles on aerial cell surfaces, conferring cellular hydrophobicity that supports fungal growth, development and dispersal; whereas Class II form highly ordered films at water-air interfaces through intermolecular interactions but contribute nothing to the rodlet structure. Hah1 is a class I hydrophobin that is involved in aerial growth of mycelia, but does not play a role in pathogenesis. The sequence is that of Class I hydrophobin 1 from Heterobasidion annosum (Root rot fungus).